Consider the following 930-residue polypeptide: Protocadherin gamma-B6 (930 aa).

The signal sequence occupies residues 1-30 (MGGSCAQRRRAGPRQVLFPLLLPLFYPTLS). Cadherin domains are found at residues 31-133 (EPIR…APQF), 134-242 (DKKE…PPVF), 243-347 (SRDE…SPEI), 348-452 (IITS…APVF), 453-562 (DQTS…APRV), and 570-675 (DGSA…LPDL). The Extracellular segment spans residues 31-691 (EPIRYSIPEE…SDPQAELQFY (661 aa)). N-linked (GlcNAc...) asparagine glycosylation is found at Asn-304, Asn-419, and Asn-545. A helical membrane pass occupies residues 692–712 (LVVALALISVLFLLAVILAIA). The Cytoplasmic segment spans residues 713-930 (LRLRRSLSPA…KKKSGKKEKK (218 aa)). Disordered regions lie at residues 791–839 (PHGG…WPNN) and 900–930 (ATLTNAAGKRDGKAPAGGNGNKKKSGKKEKK). Residues 800–839 (HPETLTSQAPPNTDWRFSQAQRPGTSGSQNGDDTGTWPNN) show a composition bias toward polar residues. Residues 920-930 (NKKKSGKKEKK) show a composition bias toward basic residues.

It is found in the cell membrane. Functionally, potential calcium-dependent cell-adhesion protein. May be involved in the establishment and maintenance of specific neuronal connections in the brain. The polypeptide is Protocadherin gamma-B6 (PCDHGB6) (Homo sapiens (Human)).